The chain runs to 239 residues: Sugar fermentation stimulation protein homolog (239 aa).

Belongs to the SfsA family.

The polypeptide is Sugar fermentation stimulation protein homolog (Rhizobium meliloti (strain 1021) (Ensifer meliloti)).